We begin with the raw amino-acid sequence, 459 residues long: Probable 3-ketoacyl-CoA synthase 14 (459 aa).

Positions 1-25 (MFIAMADFKLLLLILILLSLFELDL) are cleaved as a signal peptide. The chain crosses the membrane as a helical span at residues 32–52 (FFSPFPVKIGLLLISIFFYAY). An FAE domain is found at 52–334 (YSTTRSKPVY…FILFLVKSKL (283 aa)). Residues His-268, His-352, His-356, His-385, and Asn-389 contribute to the active site.

It belongs to the thiolase-like superfamily. Chalcone/stilbene synthases family. As to expression, expressed in siliques.

The protein localises to the membrane. It carries out the reaction a very-long-chain acyl-CoA + malonyl-CoA + H(+) = a very-long-chain 3-oxoacyl-CoA + CO2 + CoA. It functions in the pathway lipid metabolism; fatty acid biosynthesis. The chain is Probable 3-ketoacyl-CoA synthase 14 from Arabidopsis thaliana (Mouse-ear cress).